A 349-amino-acid chain; its full sequence is Microfibril-associated glycoprotein 3 (349 aa).

An N-terminal signal peptide occupies residues 1–21 (MKLHHCLSFLLVVTLVPAALS). Residues 22–139 (LEDVAPLGAN…TLRVIFTSGD (118 aa)) lie on the Extracellular side of the membrane. Asparagine 31, asparagine 36, asparagine 63, and asparagine 103 each carry an N-linked (GlcNAc...) asparagine glycan. Residues 41–130 (PSFELSAGSY…SPARASYSVT (90 aa)) enclose the Ig-like C2-type domain. Cysteine 68 and cysteine 117 form a disulfide bridge. Residues 140 to 160 (MSVYYMVVCLIAFTITLILNV) traverse the membrane as a helical segment. The Cytoplasmic segment spans residues 161-349 (TRLCLMSTHL…EGSIHHRVSI (189 aa)). The tract at residues 280–349 (NPELGRSNSP…EGSIHHRVSI (70 aa)) is disordered. A compositionally biased stretch (polar residues) spans 311–331 (VHLQSETKSIGTDSQDSSHFS).

Post-translationally, glycosylated.

The protein localises to the cell membrane. Component of the elastin-associated microfibrils. The sequence is that of Microfibril-associated glycoprotein 3 (Mfap3) from Mus musculus (Mouse).